A 787-amino-acid chain; its full sequence is Endonuclease MutS2 (787 aa).

Residue 335–342 (GPNTGGKT) coordinates ATP. Residues 712–787 (LDLRGERYED…GLGNTVIELK (76 aa)) form the Smr domain.

The protein belongs to the DNA mismatch repair MutS family. MutS2 subfamily. As to quaternary structure, homodimer. Binds to stalled ribosomes, contacting rRNA.

Its function is as follows. Endonuclease that is involved in the suppression of homologous recombination and thus may have a key role in the control of bacterial genetic diversity. Functionally, acts as a ribosome collision sensor, splitting the ribosome into its 2 subunits. Detects stalled/collided 70S ribosomes which it binds and splits by an ATP-hydrolysis driven conformational change. Acts upstream of the ribosome quality control system (RQC), a ribosome-associated complex that mediates the extraction of incompletely synthesized nascent chains from stalled ribosomes and their subsequent degradation. Probably generates substrates for RQC. This Shouchella clausii (strain KSM-K16) (Alkalihalobacillus clausii) protein is Endonuclease MutS2.